Here is a 296-residue protein sequence, read N- to C-terminus: Probable xyloglucan endotransglucosylase/hydrolase 1 (296 aa).

A signal peptide spans 1 to 22 (MGIIKGVLFSIVLINLSLVVFC). The GH16 domain maps to 23 to 221 (GYPRRPVDVP…WANAPFTASY (199 aa)). The active-site Nucleophile is the glutamate 107. The active-site Proton donor is glutamate 111. Glutamate 111 contacts xyloglucan. Residue asparagine 115 is glycosylated (N-linked (GlcNAc...) asparagine). Residues 124–126 (QTN), 134–136 (NRE), 200–201 (DW), and glycine 205 contribute to the xyloglucan site. 2 cysteine pairs are disulfide-bonded: cysteine 229–cysteine 240 and cysteine 277–cysteine 290. Arginine 282 lines the xyloglucan pocket.

This sequence belongs to the glycosyl hydrolase 16 family. XTH group 1 subfamily. Contains at least one intrachain disulfide bond essential for its enzymatic activity.

The protein resides in the secreted. Its subcellular location is the cell wall. The protein localises to the extracellular space. It is found in the apoplast. It catalyses the reaction breaks a beta-(1-&gt;4) bond in the backbone of a xyloglucan and transfers the xyloglucanyl segment on to O-4 of the non-reducing terminal glucose residue of an acceptor, which can be a xyloglucan or an oligosaccharide of xyloglucan.. Functionally, catalyzes xyloglucan endohydrolysis (XEH) and/or endotransglycosylation (XET). Cleaves and religates xyloglucan polymers, an essential constituent of the primary cell wall, and thereby participates in cell wall construction of growing tissues. The chain is Probable xyloglucan endotransglucosylase/hydrolase 1 (XTH1) from Solanum lycopersicum (Tomato).